A 199-amino-acid polypeptide reads, in one-letter code: Ribonuclease HII (199 aa).

The region spanning 1–199 is the RNase H type-2 domain; it reads MCVCGIDEAG…TYKNLVQGHI (199 aa). 3 residues coordinate a divalent metal cation: Asp7, Glu8, and Asp97.

The protein belongs to the RNase HII family. Mn(2+) serves as cofactor. Requires Mg(2+) as cofactor.

The protein resides in the cytoplasm. The enzyme catalyses Endonucleolytic cleavage to 5'-phosphomonoester.. In terms of biological role, endonuclease that specifically degrades the RNA of RNA-DNA hybrids. The polypeptide is Ribonuclease HII (Picrophilus torridus (strain ATCC 700027 / DSM 9790 / JCM 10055 / NBRC 100828 / KAW 2/3)).